A 469-amino-acid chain; its full sequence is UDP-N-acetylmuramate--L-alanine ligase (469 aa).

An ATP-binding site is contributed by 113 to 119 (GTHGKTT).

Belongs to the MurCDEF family.

The protein localises to the cytoplasm. The enzyme catalyses UDP-N-acetyl-alpha-D-muramate + L-alanine + ATP = UDP-N-acetyl-alpha-D-muramoyl-L-alanine + ADP + phosphate + H(+). Its pathway is cell wall biogenesis; peptidoglycan biosynthesis. In terms of biological role, cell wall formation. The polypeptide is UDP-N-acetylmuramate--L-alanine ligase (Neisseria meningitidis serogroup B (strain ATCC BAA-335 / MC58)).